The sequence spans 359 residues: Trans-enoyl reductase RAP1 (359 aa).

An NADP(+)-binding site is contributed by 49–52; the sequence is CDFK. 137-144 lines the substrate pocket; the sequence is TCIATACM. NADP(+) is bound by residues 195–198, Y213, and 260–261; these read SPKN and LE. A substrate-binding site is contributed by 281–285; that stretch reads GQMIL. 350–351 contributes to the NADP(+) binding site; sequence VA.

Belongs to the zinc-containing alcohol dehydrogenase family. In terms of assembly, monomer.

It functions in the pathway secondary metabolite biosynthesis. Functionally, trans-enoyl reductase; part of the gene cluster that mediates the biosynthesis of a tyrosine-derived cytochalasan acting as a fungal signal recognized by resistant rice plants and leads to avirulence in Pi33 resistant rice cultivars. The first step in the pathway is catalyzed by the hybrid PKS-NRPS ACE1, assisted by the enoyl reductase RAP1, that are responsible for fusion of the tyrosine precursor and the polyketide backbone. The polyketide synthase module (PKS) of ACE1 is responsible for the synthesis of the polyketide backbone and the downstream nonribosomal peptide synthetase (NRPS) amidates the carboxyl end of the polyketide with the tyrosine precursor. Because ACE1 lacks a designated enoylreductase (ER) domain, the required activity is provided the enoyl reductase RAP1. Reduction by the hydrolyase ORFZ, followed by dehydration and intra-molecular Diels-Alder cyclization by the Diels-Alderase ORF3 then yield the required isoindolone-fused macrocycle. A number of oxidative steps catalyzed by the tailoring enzymes identified within the cluster, including cytochrome P450 monooxygenases CYP1 to CYP4, the FAD-linked oxidoreductase OXR2 and the short-chain dehydrogenase/reductase OXR1, are further required to afford the final cytochalasans that confer avirulence and which have still to be identified. The monooxygenase CYP1 has been shown to be a site-selective C-18 hydroxylase whereas the function of CYP3 is the site-selective epoxidation of the C-6/C-7 olefin that is present in some intermediate compounds. Finally, SYN2 and RAP2 are not required for avirulence in Pi33 resistant rice cultivars. The protein is Trans-enoyl reductase RAP1 of Pyricularia oryzae (strain 70-15 / ATCC MYA-4617 / FGSC 8958) (Rice blast fungus).